The sequence spans 287 residues: 2-dehydro-3-deoxyphosphooctonate aldolase (287 aa).

The protein belongs to the KdsA family.

The protein resides in the cytoplasm. The catalysed reaction is D-arabinose 5-phosphate + phosphoenolpyruvate + H2O = 3-deoxy-alpha-D-manno-2-octulosonate-8-phosphate + phosphate. It functions in the pathway carbohydrate biosynthesis; 3-deoxy-D-manno-octulosonate biosynthesis; 3-deoxy-D-manno-octulosonate from D-ribulose 5-phosphate: step 2/3. The protein operates within bacterial outer membrane biogenesis; lipopolysaccharide biosynthesis. This is 2-dehydro-3-deoxyphosphooctonate aldolase from Nitrobacter hamburgensis (strain DSM 10229 / NCIMB 13809 / X14).